We begin with the raw amino-acid sequence, 1196 residues long: MPGKLVGSSEEAARTGTQANAHAEDHSDLEHSAPSTDDGFDEPKPPIAKSVPPSTAIPKKNNFKQRGNTKNVKPPTLEEMKELRDTQNLFHSNLFKLQVKEMLEELQLKQKYTDFIENWLESFTVFTRQLKDGLMERTHLEVPMKLSEKPTGFVFSKPTREPYLIGAAATGTLLGPKIVVDVALEMPKESLHKEDYLNLRYDQKRALYLTYVTERMMESPDYAQDQFNFNYYANNPLKPVLELIPVTKQVNKHLQVRLFITAPLSSFKPGRFVPWNNNIRPSFYGDEWDEQDPLPSTQHYNANVLFDLTLSENQAQLDKAFKSRRNFQDGLLLLKVWLRQRQLDIGYSGFGAHILAAFIVYLNKQRILHQSSSSYQVARTVWNQLANTDWTKGISLAVDPIQTEELNKFAEHYDVCFIDFTGQHNLCANIPLYLYKRVREEAKLAVELLNDMKLNSFPLIFMQKCPLYSRVDNILKISNYSCINQMLTLHSQPRIKYDFANYGYPQLLHLLTELLKKGLAERVHSILPLETATAAWPVENKAPVIGKYIQLGLILQPEHAYEVLNKGPAANDDLAGAEEFRRFWGEKSNLRRFQDGSITEAVVWGTAQDSPAKKRLIVRHVVLHLLEHHLQLDSKEVQYIGGELDQVYKLSPWFKVNKLKTKLSLDQDTDAEALSPHVIRCYDELARQLHGLNDLPLEIVSISGVSPIFRYCEPQPVLPQALLVENRILASTIQRVVIQLGQSGKWPTELGALRALKTAFLIEIGEKLEAQCRLHWVISADGLLVLKQGYCFLIELAHNKELALLKQEVTERGITTYVDNAASRFLERQHYILPKVSGALHSLHQTYSAFGSTVLLAKRWLATQLLDDGLWPDMATELLVAHLFQQRYAPQSIAAPQTGFIRFLQLLSHSDFNGELFLLNFNNSWQEQQIADLEHNYRSNRQSYPPLAVATSYDMQHAGRLWTSDQSPSQRVLGHVTRLARRALEIIETSLMSKDLRFVRPAQLFRASNEGYDLVIQFKPDLVPNSLSYDLGSPFVSFSQPNFSLPRAGSDYIARIVGLLRSAYSDFAAFFYNPHGGKELAIVWRPTTEFAAKPFKVTELQACRPCGNGKVQVLKETLLEDFKLLLKDFYLRIATPEELKREQREHQKPMRYFEANQAVEESKPKPKKHRKRKGTGKEAPPKKKRLIKSSTLKALK.

2 disordered regions span residues 1-75 (MPGK…VKPP) and 1140-1196 (KREQ…KALK). The segment covering 22–31 (HAEDHSDLEH) has biased composition (basic and acidic residues). A compositionally biased stretch (basic residues) spans 1165 to 1174 (KPKKHRKRKG).

This sequence belongs to the NRAP family. In terms of assembly, part of the small subunit (SSU) processome, composed of more than 70 proteins and the RNA chaperone small nucleolar RNA (snoRNA) U3.

The protein resides in the nucleus. It is found in the nucleolus. It localises to the chromosome. Functionally, part of the small subunit (SSU) processome, first precursor of the small eukaryotic ribosomal subunit. During the assembly of the SSU processome in the nucleolus, many ribosome biogenesis factors, an RNA chaperone and ribosomal proteins associate with the nascent pre-rRNA and work in concert to generate RNA folding, modifications, rearrangements and cleavage as well as targeted degradation of pre-ribosomal RNA by the RNA exosome. The chain is Nucleolar protein 6 from Drosophila sechellia (Fruit fly).